Here is a 176-residue protein sequence, read N- to C-terminus: Disulfide bond formation protein B (176 aa).

At 1–14 (MLQFLNRCSRGRGA) the chain is on the cytoplasmic side. The helical transmembrane segment at 15–31 (WLLMALTAFLLELTALY) threads the bilayer. Topologically, residues 32-49 (FQHIMLLQPCVMCIYERV) are periplasmic. A disulfide bridge links C41 with C44. A helical membrane pass occupies residues 50-65 (ALFGILGASLLGAIAP). The Cytoplasmic segment spans residues 66 to 71 (RSPLRY). Residues 72–89 (LAIAVWIYSAWKGVQLAW) traverse the membrane as a helical segment. At 90 to 144 (AHTMLQLNPSPFNTCDFFVNFPSWLPLDKWLPAVFAASGDCSERQWQFMSLEMPQ) the chain is on the periplasmic side. A disulfide bridge connects residues C104 and C130. Residues 145–163 (WLVGIFAAYLVIAVLVLIS) traverse the membrane as a helical segment. Residues 164 to 176 (QFVKPKRRDLFGR) are Cytoplasmic-facing.

The protein belongs to the DsbB family.

The protein resides in the cell inner membrane. Functionally, required for disulfide bond formation in some periplasmic proteins. Acts by oxidizing the DsbA protein. This Yersinia pestis bv. Antiqua (strain Nepal516) protein is Disulfide bond formation protein B.